The following is a 303-amino-acid chain: Flavin-dependent thymidylate synthase (303 aa).

The disordered stretch occupies residues 1 to 21 (MALTSEQRAEIEAQRSEPQLT). One can recognise a ThyX domain in the interval 43–256 (GFLRVVDYMG…PATAAAFEEY (214 aa)). Residues threonine 89, 112–114 (RHR), and glutamate 120 each bind FAD. DUMP is bound by residues 109–112 (QWIR), 120–124 (EYSAR), and arginine 195. A ThyX motif motif is present at residues 112–122 (RHRMASVNEYS). Residues 211–213 (DLH) and histidine 217 each bind FAD. Residue arginine 222 participates in dUMP binding. Arginine 222 serves as the catalytic Involved in ionization of N3 of dUMP, leading to its activation.

This sequence belongs to the thymidylate synthase ThyX family. Homotetramer. It depends on FAD as a cofactor.

The catalysed reaction is dUMP + (6R)-5,10-methylene-5,6,7,8-tetrahydrofolate + NADPH + H(+) = dTMP + (6S)-5,6,7,8-tetrahydrofolate + NADP(+). The protein operates within pyrimidine metabolism; dTTP biosynthesis. Functionally, catalyzes the reductive methylation of 2'-deoxyuridine-5'-monophosphate (dUMP) to 2'-deoxythymidine-5'-monophosphate (dTMP) while utilizing 5,10-methylenetetrahydrofolate (mTHF) as the methyl donor, and NADPH and FADH(2) as the reductant. This is Flavin-dependent thymidylate synthase from Gluconobacter oxydans (strain 621H) (Gluconobacter suboxydans).